Consider the following 197-residue polypeptide: Cell division protein SepF (197 aa).

A disordered region spans residues 15 to 89 (EEEEVEGPEE…RMNNNSKNNS (75 aa)). The span at 22-42 (PEERESSRSRERVQEREDYNR) shows a compositional bias: basic and acidic residues. Positions 43–73 (NENQATPQTFNNKQQAIKSVPQKNTLRSNTT) are enriched in polar residues. The segment covering 80-89 (RMNNNSKNNS) has biased composition (low complexity).

The protein belongs to the SepF family. As to quaternary structure, homodimer. Interacts with FtsZ.

Its subcellular location is the cytoplasm. Its function is as follows. Cell division protein that is part of the divisome complex and is recruited early to the Z-ring. Probably stimulates Z-ring formation, perhaps through the cross-linking of FtsZ protofilaments. Its function overlaps with FtsA. This Staphylococcus epidermidis (strain ATCC 35984 / DSM 28319 / BCRC 17069 / CCUG 31568 / BM 3577 / RP62A) protein is Cell division protein SepF.